Here is a 567-residue protein sequence, read N- to C-terminus: Potassium-transporting ATPase potassium-binding subunit (567 aa).

11 helical membrane passes run 5-25 (GWIQILVFCGIIGLLTKPLGF), 64-84 (TAYAVALLLFNLAGFLVLYAL), 136-156 (GLTVQNFVSAATGIAIAIALI), 179-199 (LYVLLPLCIVLTLVYVWLGIP), 254-274 (ISNLIQMVTIFALGAALTNVF), 285-305 (WAILASMGALFIAGVAVCYWA), 330-350 (FGIALSALFAVITTAASCGAV), 357-376 (FTALGGMIPLINMQLGEVIV), 421-441 (MLAILCLPLAMLIFTAIAVVL), 486-506 (ITIGIGMLMGRFLVIIPALAI), and 529-549 (LFVGLLIGVIVIVGGLTFFPA).

It belongs to the KdpA family. As to quaternary structure, the system is composed of three essential subunits: KdpA, KdpB and KdpC.

It localises to the cell inner membrane. Its function is as follows. Part of the high-affinity ATP-driven potassium transport (or Kdp) system, which catalyzes the hydrolysis of ATP coupled with the electrogenic transport of potassium into the cytoplasm. This subunit binds the periplasmic potassium ions and delivers the ions to the membrane domain of KdpB through an intramembrane tunnel. This is Potassium-transporting ATPase potassium-binding subunit from Mesorhizobium japonicum (strain LMG 29417 / CECT 9101 / MAFF 303099) (Mesorhizobium loti (strain MAFF 303099)).